The chain runs to 172 residues: Transcriptional repressor NrdR (172 aa).

A zinc finger lies at 3–34; it reads CPFCGAPDTRVIDSRLAGEGDQVRRRRECLSC. The region spanning 49 to 139 is the ATP-cone domain; that stretch reads PRVVKRDGSR…VYLSFADVQA (91 aa).

The protein belongs to the NrdR family. Zn(2+) is required as a cofactor.

In terms of biological role, negatively regulates transcription of bacterial ribonucleotide reductase nrd genes and operons by binding to NrdR-boxes. The polypeptide is Transcriptional repressor NrdR (Thioalkalivibrio sulfidiphilus (strain HL-EbGR7)).